Here is a 489-residue protein sequence, read N- to C-terminus: Glutamyl-tRNA(Gln) amidotransferase subunit A (489 aa).

Active-site charge relay system residues include Lys77 and Ser152. Catalysis depends on Ser176, which acts as the Acyl-ester intermediate.

This sequence belongs to the amidase family. GatA subfamily. As to quaternary structure, heterotrimer of A, B and C subunits.

The enzyme catalyses L-glutamyl-tRNA(Gln) + L-glutamine + ATP + H2O = L-glutaminyl-tRNA(Gln) + L-glutamate + ADP + phosphate + H(+). In terms of biological role, allows the formation of correctly charged Gln-tRNA(Gln) through the transamidation of misacylated Glu-tRNA(Gln) in organisms which lack glutaminyl-tRNA synthetase. The reaction takes place in the presence of glutamine and ATP through an activated gamma-phospho-Glu-tRNA(Gln). The polypeptide is Glutamyl-tRNA(Gln) amidotransferase subunit A (Levilactobacillus brevis (strain ATCC 367 / BCRC 12310 / CIP 105137 / JCM 1170 / LMG 11437 / NCIMB 947 / NCTC 947) (Lactobacillus brevis)).